Reading from the N-terminus, the 215-residue chain is Probable maleylacetoacetate isomerase (215 aa).

Residues 2-85 (MSLILYGYWR…YLDETYPAPR (84 aa)) form the GST N-terminal domain. Residues 90–215 (RGAERYQVKA…AAPENQPDAC (126 aa)) form the GST C-terminal domain.

Belongs to the GST superfamily. Zeta family.

It catalyses the reaction 4-maleylacetoacetate = 4-fumarylacetoacetate. It participates in amino-acid degradation; L-phenylalanine degradation; acetoacetate and fumarate from L-phenylalanine: step 5/6. This Vibrio cholerae serotype O1 (strain ATCC 39315 / El Tor Inaba N16961) protein is Probable maleylacetoacetate isomerase (maiA).